The primary structure comprises 316 residues: Transaldolase (316 aa).

Lys132 acts as the Schiff-base intermediate with substrate in catalysis.

This sequence belongs to the transaldolase family. Type 1 subfamily. As to quaternary structure, homodimer.

The protein resides in the cytoplasm. The catalysed reaction is D-sedoheptulose 7-phosphate + D-glyceraldehyde 3-phosphate = D-erythrose 4-phosphate + beta-D-fructose 6-phosphate. It functions in the pathway carbohydrate degradation; pentose phosphate pathway; D-glyceraldehyde 3-phosphate and beta-D-fructose 6-phosphate from D-ribose 5-phosphate and D-xylulose 5-phosphate (non-oxidative stage): step 2/3. Functionally, transaldolase is important for the balance of metabolites in the pentose-phosphate pathway. The sequence is that of Transaldolase from Vibrio parahaemolyticus serotype O3:K6 (strain RIMD 2210633).